The primary structure comprises 508 residues: Citrate lyase alpha chain (508 aa).

As to quaternary structure, oligomer with a subunit composition of (alpha,beta,gamma)6.

It is found in the cytoplasm. It carries out the reaction citrate = oxaloacetate + acetate. The catalysed reaction is citrate + acetyl-CoA = (3S)-citryl-CoA + acetate. Its function is as follows. Represents a citrate:acetyl-ACP transferase. This chain is Citrate lyase alpha chain (citF), found in Klebsiella pneumoniae.